The sequence spans 106 residues: Probable insulin-like peptide beta-type 2 (106 aa).

A signal peptide spans 1 to 15; that stretch reads MNAIIFCLLFTTVTA. A propeptide spanning residues 16–56 is cleaved from the precursor; it reads TYEVFGKGIEHRNEHLIINQLDIIPVESTPTPNRASRVQKR. Intrachain disulfides connect cysteine 58/cysteine 86, cysteine 70/cysteine 99, cysteine 73/cysteine 100, and cysteine 85/cysteine 90.

The protein belongs to the insulin family.

The protein resides in the secreted. This is Probable insulin-like peptide beta-type 2 (ins-2) from Caenorhabditis elegans.